The primary structure comprises 96 residues: Large ribosomal subunit protein uL23 (96 aa).

Belongs to the universal ribosomal protein uL23 family. Part of the 50S ribosomal subunit. Contacts protein L29, and trigger factor when it is bound to the ribosome.

Its function is as follows. One of the early assembly proteins it binds 23S rRNA. One of the proteins that surrounds the polypeptide exit tunnel on the outside of the ribosome. Forms the main docking site for trigger factor binding to the ribosome. This Bacillus cytotoxicus (strain DSM 22905 / CIP 110041 / 391-98 / NVH 391-98) protein is Large ribosomal subunit protein uL23.